The primary structure comprises 251 residues: MPANYDFTDKRILVTGASQGIGKEICLSLAKAGAQVIAFARNEANLLSLVKETTSLRYTIIPIVGDVSANEEVLFKLIVPHFPIHGLVNNAGIATNHAIGQITQQSIDRTFAVNVRGPILIAQLVARNFVDRQIKGSIVNISSQAAIRPLDNHTVYCASKAALDMVTRCLANELGSQNIRVNSVNPTVVMTDMGRDNWSDPDKKKKMLDRMPIKRFAEVDEVVNAVLFLLSDNASMTTGSTLPVDGGFSNN.

An NADP(+)-binding site is contributed by 13 to 42 (LVTGASQGIGKEICLSLAKAGAQVIAFARN). Position 143 (Ser-143) interacts with substrate. Tyr-156 serves as the catalytic Proton acceptor. Residue Lys-160 participates in NADP(+) binding.

It belongs to the short-chain dehydrogenases/reductases (SDR) family. As to quaternary structure, homotetramer. Expressed in intestine, gonad and spermatids (at protein level). Expressed in intestine, uterine seam, gonadal sheath cells, spermathecal-uterus valve and spermatids.

It is found in the cell membrane. It catalyses the reaction xylitol + NADP(+) = L-xylulose + NADPH + H(+). With respect to regulation, strongly inhibited by 10% dimethyl sulfoxide. Catalyzes the NADPH-dependent reduction of L-xylulose, D-xylulose, L-(+) erythrulose, D-erythrose, D-threose, L-ribulose, 1,4-dibromo-2,3-butanedione and 2,3-heptanedione. Also active against isatin, 9,10-phenanthrenequinone, menadione, 2,3-hexaenadione and 3,4-hexahenadione. No activity observed when tested using NADH rather than NADPH. The sequence is that of L-xylulose reductase from Caenorhabditis elegans.